The following is a 481-amino-acid chain: 1-acylglycerol-3-phosphate O-acyltransferase PNPLA3 (481 aa).

The Cytoplasmic portion of the chain corresponds to M1–R41. Positions L10–K179 constitute a PNPLA domain. The GXGXXG signature appears at G14 to G19. A helical; Signal-anchor for type II membrane protein transmembrane segment spans residues M42–L62. The short motif at G45 to G49 is the GXSXG element. The Nucleophile role is filled by S47. The Lumenal portion of the chain corresponds to E63–L481. N89 is a glycosylation site (N-linked (GlcNAc...) asparagine). D166 functions as the Proton acceptor in the catalytic mechanism. The DGA/G motif lies at D166–G168. An N-linked (GlcNAc...) asparagine glycan is attached at N280.

It is found in the membrane. It localises to the lipid droplet. It catalyses the reaction a 1-acyl-sn-glycero-3-phosphate + an acyl-CoA = a 1,2-diacyl-sn-glycero-3-phosphate + CoA. The catalysed reaction is a triacylglycerol + H2O = a diacylglycerol + a fatty acid + H(+). The enzyme catalyses a 1-acylglycerol + a 1,3-diacylglycerol = a triacylglycerol + glycerol. It carries out the reaction a 1-acylglycerol + a 1,2-diacylglycerol = a triacylglycerol + glycerol. It catalyses the reaction 2 a 1-acylglycerol = a 1,2-diacylglycerol + glycerol. The catalysed reaction is 1-(9Z-octadecenoyl)-sn-glycero-3-phosphate + (9Z)-octadecenoyl-CoA = 1,2-di-(9Z-octadecenoyl)-sn-glycero-3-phosphate + CoA. The enzyme catalyses 1-(9Z-octadecenoyl)-sn-glycero-3-phosphate + hexadecanoyl-CoA = 1-(9Z)-octadecenoyl-2-hexadecanoyl-sn-glycero-3-phosphate + CoA. It carries out the reaction 1-(9Z-octadecenoyl)-sn-glycero-3-phosphate + (9Z,12Z)-octadecadienoyl-CoA = 1-(9Z)-octadecenoyl-2-(9Z,12Z)-octadecadienoyl-sn-glycero-3-phosphate + CoA. It catalyses the reaction 1-(9Z-octadecenoyl)-sn-glycero-3-phosphate + (5Z,8Z,11Z,14Z)-eicosatetraenoyl-CoA = 1-(9Z)-octadecenoyl-2-(5Z,8Z,11Z,14Z)-eicosatetraenoyl-sn-glycero-3-phosphate + CoA. The catalysed reaction is 2 1-(9Z-octadecenoyl)-glycerol = 1,2-di-(9Z-octadecenoyl)-glycerol + glycerol. The enzyme catalyses 1-(9Z-octadecenoyl)-glycerol + 1,2-di-(9Z-octadecenoyl)-glycerol = 1,2,3-tri-(9Z-octadecenoyl)-glycerol + glycerol. It carries out the reaction 1-(9Z-octadecenoyl)-glycerol + 1,3-di-(9Z-octadecenoyl)-glycerol = 1,2,3-tri-(9Z-octadecenoyl)-glycerol + glycerol. It catalyses the reaction 1,2,3-tri-(9Z-octadecenoyl)-glycerol + H2O = 1,3-di-(9Z-octadecenoyl)-glycerol + (9Z)-octadecenoate + H(+). The catalysed reaction is a 1,2-diacyl-sn-glycero-3-phosphocholine + H2O = a 1-acyl-sn-glycero-3-phosphocholine + a fatty acid + H(+). The protein operates within phospholipid metabolism. Its pathway is glycerolipid metabolism. The triglyceride lipase activity is inhibited by BEL ((E)-6-(bromomethylene)-3-(1-naphthalenyl)-2H-tetrahydropyran-2-one), a suicide substrate inhibitor. Functionally, specifically catalyzes coenzyme A (CoA)-dependent acylation of 1-acyl-sn-glycerol 3-phosphate (2-lysophosphatidic acid/LPA) to generate phosphatidic acid (PA), an important metabolic intermediate and precursor for both triglycerides and glycerophospholipids. Does not esterify other lysophospholipids. Acyl donors are long chain (at least C16) fatty acyl-CoAs: arachidonoyl-CoA, linoleoyl-CoA, oleoyl-CoA and at a lesser extent palmitoyl-CoA. Additionally possesses low triacylglycerol lipase and CoA-independent acylglycerol transacylase activities and thus may play a role in acyl-chain remodeling of triglycerides. In vitro may express hydrolytic activity against glycerolipids triacylglycerol, diacylglycerol and monoacylglycerol, with a strong preference for oleic acid as the acyl moiety. However, the triacylglycerol hydrolase activity is controversial and may be very low. Possesses phospholipase A2 activity. This Homo sapiens (Human) protein is 1-acylglycerol-3-phosphate O-acyltransferase PNPLA3.